Consider the following 1156-residue polypeptide: Nitric oxide synthase, inducible (1156 aa).

The DINNN-motif; mediates interaction with SPSB1, SPSB2 and SPSB4 signature appears at 23-27 (DINNN). The segment at 27–84 (NVGKFYQPPSSPVTQDDPKRHSPGKHGNESPQPLTGTVKTSPESLSKLDAPPSACPRH) is disordered. Residues 55 to 70 (ESPQPLTGTVKTSPES) are compositionally biased toward polar residues. 2 residues coordinate Zn(2+): Cys-110 and Cys-115. A (6R)-L-erythro-5,6,7,8-tetrahydrobiopterin-binding site is contributed by Ser-118. Cys-200 is a binding site for heme b. L-arginine-binding residues include Gln-263, Trp-372, Tyr-373, and Glu-377. Positions 381, 462, 463, and 476 each coordinate (6R)-L-erythro-5,6,7,8-tetrahydrobiopterin. Tyr-491 lines the heme b pocket. A calmodulin-binding region spans residues 515–535 (FKVLVKAVFFASVLMHKAMAS). The 139-residue stretch at 539-677 (ATILFATETG…AFRSWAVQTF (139 aa)) folds into the Flavodoxin-like domain. 5 residues coordinate FMN: Thr-545, Glu-546, Thr-547, Arg-549, and Ser-550. The residue at position 575 (Tyr-575) is a Phosphotyrosine. FMN-binding residues include Ser-591, Thr-592, Ser-628, Cys-635, Glu-661, and Gln-665. An FAD-binding FR-type domain is found at 730–970 (KHVFTMRLKS…VRSASGFQLP (241 aa)). Arg-750 provides a ligand contact to NADP(+). Residues His-772, Arg-906, Tyr-908, Ser-909, Thr-924, and Ala-926 each contribute to the FAD site. Thr-929 contacts NADP(+). Tyr-930, Val-943, Cys-944, and Ser-945 together coordinate FAD. The NADP(+) site is built by Thr-984, Arg-1017, Ser-1046, Arg-1047, Lys-1053, Tyr-1055, Gln-1057, and Asp-1090.

This sequence belongs to the NOS family. In terms of assembly, homodimer. Interacts with NHERF1. Interacts with GAPDH; induced by oxidatively-modified low-densitity lipoprotein (LDL(ox)). Interacts with S100A8 and S100A9 to form the iNOS-S100A8/9 transnitrosylase complex. Interacts with SPSB1, SPSB2 and SPSB4. Interacts with ELOC and CUL5 in the presence of SPSB1 or SPSB2 or SPSB4. Forms a complex with ASL, ASS1 and HSP90AA1; the complex regulates cell-autonomous L-arginine synthesis and citrulline recycling while channeling extracellular L-arginine to nitric oxide synthesis pathway. Requires heme b as cofactor. The cofactor is FAD. It depends on FMN as a cofactor. (6R)-L-erythro-5,6,7,8-tetrahydrobiopterin serves as cofactor. Post-translationally, polyubiquitinated; mediated by SPSB1, SPSB2 and SPSB4, leading to proteasomal degradation.

Its subcellular location is the cytoplasm. It localises to the cytosol. It carries out the reaction 2 L-arginine + 3 NADPH + 4 O2 + H(+) = 2 L-citrulline + 2 nitric oxide + 3 NADP(+) + 4 H2O. With respect to regulation, regulated by calcium/calmodulin. Functionally, produces nitric oxide (NO) which is a messenger molecule with diverse functions throughout the body. In macrophages, NO mediates tumoricidal and bactericidal actions. Also has nitrosylase activity and mediates cysteine S-nitrosylation of cytoplasmic target proteins such PTGS2/COX2. As component of the iNOS-S100A8/9 transnitrosylase complex involved in the selective inflammatory stimulus-dependent S-nitrosylation of GAPDH implicated in regulation of the GAIT complex activity and probably multiple targets including ANXA5, EZR, MSN and VIM. Involved in inflammation, enhances the synthesis of pro-inflammatory mediators such as IL6 and IL8. The polypeptide is Nitric oxide synthase, inducible (NOS2) (Bos taurus (Bovine)).